Consider the following 278-residue polypeptide: Transmembrane protein 41B (278 aa).

A disordered region spans residues 1-31; it reads MQVHERSHTGGHTFQCNHGNEKKAPAAGKVH. The next 6 membrane-spanning stretches (helical) occupy residues 39-59, 96-116, 142-162, 184-204, 212-232, and 249-269; these read MSLLILVSIFLCAASVMFLVY, FYVEVLVAYFTTYIFLQTFAI, CSGLGASFCYLLSYLVGRPVV, LINYIIFLRITPFLPNWFINI, PLKVFFLGTFIGVAPPSFVAI, and SWNSVIILMVLAVLSILPAIF. Residues 127-238 form a VTT domain; required for its function in autophagy region; sequence GFLYPFPLAL…FVAIKAGTTL (112 aa).

It belongs to the TMEM41 family.

Its subcellular location is the endoplasmic reticulum membrane. It is found in the endomembrane system. It carries out the reaction a 1,2-diacyl-sn-glycero-3-phospho-L-serine(in) = a 1,2-diacyl-sn-glycero-3-phospho-L-serine(out). The enzyme catalyses cholesterol(in) = cholesterol(out). The catalysed reaction is a 1,2-diacyl-sn-glycero-3-phosphocholine(in) = a 1,2-diacyl-sn-glycero-3-phosphocholine(out). It catalyses the reaction a 1,2-diacyl-sn-glycero-3-phosphoethanolamine(in) = a 1,2-diacyl-sn-glycero-3-phosphoethanolamine(out). Its function is as follows. Phospholipid scramblase involved in lipid homeostasis and membrane dynamics processes. Has phospholipid scramblase activity toward cholesterol and phosphatidylserine, as well as phosphatidylethanolamine and phosphatidylcholine. Required for autophagosome formation: participates in early stages of autophagosome biogenesis at the endoplasmic reticulum (ER) membrane by reequilibrating the leaflets of the ER as lipids are extracted by atg2 (atg2a or atg2b) to mediate autophagosome assembly. In addition to autophagy, involved in other processes in which phospholipid scramblase activity is required. Required for normal motor neuron development. The chain is Transmembrane protein 41B from Xenopus laevis (African clawed frog).